Reading from the N-terminus, the 246-residue chain is Putative outer membrane protein YiaT (246 aa).

Residues 1–21 (MLINRNIVALFALPFMASATA) form the signal peptide.

Belongs to the MipA/OmpV family.

It is found in the cell outer membrane. The protein is Putative outer membrane protein YiaT (yiaT) of Escherichia coli (strain K12).